Consider the following 341-residue polypeptide: MRRQPPRPRNSPPQSHSSPSSSSSEFEFNISISPRKASSSLCPADELFYKGQLLPLQLSPRLSLVRTLGSSTSSSDYTSSSSSSVATSAARDSTESNSSTDSTASFPLLHPPPLDCCDSSRPSSVTDDEDFFFKPPKNKSSSGGFSLSRFSSVFKKDPKTNLHHHSSSSSTATTAAAPSSVKRMSSTAKEVIRKYMKKVKPLYEKLSPKQSSNIKTESSSSLKDSGNNIRGTTTVTTVTAAPTVVSSGGGLSISFSGNLMKYTKRGRCAASCPSSMRSSPNHSGVLTRGGFPVHQGSCSSSSSNNNSVSSSMEELQSAIQGAIAHCKNSMLQKNLVSSLEI.

5 disordered regions span residues 1–29 (MRRQ…FEFN), 67–122 (TLGS…SSRP), 158–185 (PKTN…KRMS), 206–230 (LSPK…NNIR), and 288–310 (RGGF…SVSS). Composition is skewed to low complexity over residues 12-29 (PPQS…FEFN), 67-108 (TLGS…SFPL), and 167-180 (SSSS…APSS). Over residues 208 to 230 (PKQSSNIKTESSSSLKDSGNNIR) the composition is skewed to polar residues. A compositionally biased stretch (low complexity) spans 297-310 (SCSSSSSNNNSVSS).

In terms of assembly, a C-terminus-derived peptide binds BRI1 in vitro.

The protein localises to the cell membrane. Functionally, may negatively regulate brassinosteroid signaling. This Arabidopsis thaliana (Mouse-ear cress) protein is Probable membrane-associated kinase regulator 1 (MAKR1).